The chain runs to 523 residues: 2-isopropylmalate synthase (523 aa).

The Pyruvate carboxyltransferase domain maps to 5–267; the sequence is VIIFDTTLRD…HTAINHQEIW (263 aa). Mn(2+) is bound by residues Asp-14, His-202, His-204, and Asn-238. The regulatory domain stretch occupies residues 392–523; that stretch reads RLDYFSVQSG…QHNENNKETV (132 aa).

The protein belongs to the alpha-IPM synthase/homocitrate synthase family. LeuA type 1 subfamily. In terms of assembly, homodimer. Mn(2+) is required as a cofactor.

It localises to the cytoplasm. The catalysed reaction is 3-methyl-2-oxobutanoate + acetyl-CoA + H2O = (2S)-2-isopropylmalate + CoA + H(+). The protein operates within amino-acid biosynthesis; L-leucine biosynthesis; L-leucine from 3-methyl-2-oxobutanoate: step 1/4. Its function is as follows. Catalyzes the condensation of the acetyl group of acetyl-CoA with 3-methyl-2-oxobutanoate (2-ketoisovalerate) to form 3-carboxy-3-hydroxy-4-methylpentanoate (2-isopropylmalate). The polypeptide is 2-isopropylmalate synthase (Shigella flexneri).